The sequence spans 355 residues: Ataxin-3 (355 aa).

Methionine 1 is covalently cross-linked (Peptide (Met-Gly) (interchain with G-Cter in ubiquitin)). In terms of domain architecture, Josephin spans 1-180; it reads MESIFHEKQE…DCEADQLLQM (180 aa). The active-site Nucleophile is the cysteine 14. The active-site Proton acceptor is histidine 119. Residue asparagine 134 is part of the active site. Lysine 200 participates in a covalent cross-link: Glycyl lysine isopeptide (Lys-Gly) (interchain with G-Cter in ubiquitin). Serine 219 carries the post-translational modification Phosphoserine. 2 consecutive UIM domains span residues 224-243 and 244-263; these read EDED…IDME and DEEA…SSRS. The segment covering 257–275 has biased composition (polar residues); the sequence is MQGSSRSMCENSPQTSSPD. The tract at residues 257–355 is disordered; it reads MQGSSRSMCE…KDNLKAERKK (99 aa). Phosphoserine is present on residues serine 268, serine 272, and serine 273. Over residues 279–289 the composition is skewed to basic and acidic residues; it reads EELRRRREAYF. Serine 321 carries the post-translational modification Phosphoserine. The UIM 3 domain maps to 329 to 348; it reads SEEDMLRAAVTMSLETAKDN. Residues 344 to 355 are compositionally biased toward basic and acidic residues; that stretch reads TAKDNLKAERKK.

Interacts with STUB1/CHIP (when monoubiquitinated). Interacts with DNA repair proteins RAD23A and RAD23B. Interacts with BECN1 (via its poly-Gln domain). Interacts with PRKN, UBR2, VCP and tubulin. Monoubiquitinated by UBE2W, possibly leading to activate the deubiquitinating enzyme activity.

The protein localises to the nucleus matrix. It is found in the nucleus. It localises to the lysosome membrane. The catalysed reaction is Thiol-dependent hydrolysis of ester, thioester, amide, peptide and isopeptide bonds formed by the C-terminal Gly of ubiquitin (a 76-residue protein attached to proteins as an intracellular targeting signal).. In terms of biological role, deubiquitinating enzyme involved in protein homeostasis maintenance, transcription, cytoskeleton regulation, myogenesis and degradation of misfolded chaperone substrates. Binds long polyubiquitin chains and trims them, while it has weak or no activity against chains of 4 or less ubiquitins. Involved in degradation of misfolded chaperone substrates via its interaction with STUB1/CHIP: recruited to monoubiquitinated STUB1/CHIP, and restricts the length of ubiquitin chain attached to STUB1/CHIP substrates and preventing further chain extension. Interacts with key regulators of transcription and represses transcription: acts as a histone-binding protein that regulates transcription. Acts as a negative regulator of mTORC1 signaling in response to amino acid deprivation by mediating deubiquitination of RHEB, thereby promoting RHEB inactivation by the TSC-TBC complex. Regulates autophagy via the deubiquitination of 'Lys-402' of BECN1 leading to the stabilization of BECN1. The polypeptide is Ataxin-3 (Atxn3) (Mus musculus (Mouse)).